The chain runs to 221 residues: MFPFLKQRSRSVHGEDAPSSTESTVSVAAADIGGACTTLTVWRKSLLVSCEGFTVIDSNGDLIYRVDNYARTRPEELILMDKDGNSLLLMHRTKKITLVDSWGIYEANDTKGETKIPKCPTWYMRKNLKMNILSTKSDILAYVYSGSFDKKNSYIIKGSYRCKSCKIVHVPLNKTVVEIKRKEVRTKGVRFGSDVFDLVVNPGFDTGLAMALVLLLDQMFS.

The disordered stretch occupies residues 1–20 (MFPFLKQRSRSVHGEDAPSS).

This sequence belongs to the LOR family.

In terms of biological role, might be related to the phospholipid scramblase and tubby-like superfamily of membrane tethered transcription factors. In Arabidopsis thaliana (Mouse-ear cress), this protein is Protein LURP-one-related 17.